We begin with the raw amino-acid sequence, 352 residues long: Phenylalanine--tRNA ligase alpha subunit (352 aa).

Mg(2+) is bound at residue Glu-258.

The protein belongs to the class-II aminoacyl-tRNA synthetase family. Phe-tRNA synthetase alpha subunit type 1 subfamily. Tetramer of two alpha and two beta subunits. Mg(2+) serves as cofactor.

It is found in the cytoplasm. It carries out the reaction tRNA(Phe) + L-phenylalanine + ATP = L-phenylalanyl-tRNA(Phe) + AMP + diphosphate + H(+). The protein is Phenylalanine--tRNA ligase alpha subunit of Staphylococcus saprophyticus subsp. saprophyticus (strain ATCC 15305 / DSM 20229 / NCIMB 8711 / NCTC 7292 / S-41).